We begin with the raw amino-acid sequence, 93 residues long: uncharacterized protein (93 aa).

This sequence belongs to the SIMIBI class G3E GTPase family. ArgK/MeaB subfamily.

This is an uncharacterized protein from Streptomyces virginiae (Streptomyces cinnamonensis).